The sequence spans 785 residues: AP-1 complex subunit gamma-like 2 (785 aa).

The essential for ubiquitin-binding stretch occupies residues 369 to 379; the sequence is LSLALVNSSNV. The tract at residues 592–617 is disordered; the sequence is GPQADEEAKESKEAAQLSEAAPVPTE. A GAE domain is found at 665–780; the sequence is APIPDLKVFE…QEIFEVNNLP (116 aa).

This sequence belongs to the adaptor complexes large subunit family. In terms of assembly, may interact with AP1S1/Sigma1A-adaptin and AP1S2/Sigma1B-adaptin. Probably does not interact with APB1. Interacts (via GAE domain) with RABEP1, NECAP1, CLINT1 and AFTPH/aftiphilin. As to quaternary structure, (Microbial infection) Interacts with HBV major surface antigen L. Interacts with HBV core protein C in a ubiquitin-dependent manner. Expressed in all but one (skeletal muscle) tissues examined.

It is found in the golgi apparatus membrane. It localises to the cytoplasmic vesicle membrane. The protein resides in the endosome membrane. Its function is as follows. May function in protein sorting in late endosomes or multivesucular bodies (MVBs). Functionally, (Microbial infection) Involved in MVB-assisted maturation of hepatitis B virus (HBV). This chain is AP-1 complex subunit gamma-like 2 (AP1G2), found in Homo sapiens (Human).